Consider the following 612-residue polypeptide: uncharacterized protein (612 aa).

Residues 171 to 217 (MLPPSLVQRNNATTSPTTDSASENNESVPSLTSSVSTSSSVYSSWNP) form a disordered region. The span at 177–196 (VQRNNATTSPTTDSASENNE) shows a compositional bias: polar residues. A compositionally biased stretch (low complexity) spans 197–214 (SVPSLTSSVSTSSSVYSS).

To yeast YNL018c.

This is an uncharacterized protein from Saccharomyces cerevisiae (strain ATCC 204508 / S288c) (Baker's yeast).